Consider the following 315-residue polypeptide: DNA-directed RNA polymerase subunit alpha (315 aa).

The tract at residues 1-228 (MLEIEKPKIE…EHFKLFMTLT (228 aa)) is alpha N-terminal domain (alpha-NTD). Residues 245-315 (KEKVLEMAIE…LGLSLKQNED (71 aa)) form an alpha C-terminal domain (alpha-CTD) region.

It belongs to the RNA polymerase alpha chain family. As to quaternary structure, homodimer. The RNAP catalytic core consists of 2 alpha, 1 beta, 1 beta' and 1 omega subunit. When a sigma factor is associated with the core the holoenzyme is formed, which can initiate transcription.

It catalyses the reaction RNA(n) + a ribonucleoside 5'-triphosphate = RNA(n+1) + diphosphate. Its function is as follows. DNA-dependent RNA polymerase catalyzes the transcription of DNA into RNA using the four ribonucleoside triphosphates as substrates. This is DNA-directed RNA polymerase subunit alpha from Clostridium kluyveri (strain NBRC 12016).